Consider the following 292-residue polypeptide: 4-diphosphocytidyl-2-C-methyl-D-erythritol kinase (292 aa).

The active site involves K11. Position 95-105 (95-105 (PVSAGLAGGSS)) interacts with ATP. D137 is an active-site residue.

Belongs to the GHMP kinase family. IspE subfamily.

The enzyme catalyses 4-CDP-2-C-methyl-D-erythritol + ATP = 4-CDP-2-C-methyl-D-erythritol 2-phosphate + ADP + H(+). Its pathway is isoprenoid biosynthesis; isopentenyl diphosphate biosynthesis via DXP pathway; isopentenyl diphosphate from 1-deoxy-D-xylulose 5-phosphate: step 3/6. Its function is as follows. Catalyzes the phosphorylation of the position 2 hydroxy group of 4-diphosphocytidyl-2C-methyl-D-erythritol. This chain is 4-diphosphocytidyl-2-C-methyl-D-erythritol kinase, found in Alkaliphilus oremlandii (strain OhILAs) (Clostridium oremlandii (strain OhILAs)).